The sequence spans 104 residues: MAEGEGWRPPRPCEAYRAEWELCRSAGHFLRHYYVHGERPACGQWRRDLASCREWEERRSAEAQADSLPPGPEGEPRVAGAGPNAVTGILTRNQGTERPHGDTR.

The tract at residues 58–104 is disordered; that stretch reads RRSAEAQADSLPPGPEGEPRVAGAGPNAVTGILTRNQGTERPHGDTR. Over residues 95–104 the composition is skewed to basic and acidic residues; that stretch reads GTERPHGDTR.

It belongs to the UPF0545 family. In terms of assembly, interacts with RTN4 isoform A/Nogo-A; the interaction results in enhanced RTN4-mediated inhibition of AMPA receptor clustering. Also interacts with NCAM1, RANBP2 and CCT8. In terms of processing, rapidly degraded by proteolysis following neuronal stimulation, resulting in increased AMPA receptor clustering.

The protein resides in the synapse. Its subcellular location is the synaptic cleft. Its function is as follows. Negatively regulates long-term potentiation and modulates adult synaptic plasticity. Stabilizes the interaction of RTN4 isoform A/Nogo-A with its receptors, inhibiting clustering of postsynaptic AMPA receptors at synaptic sites. Upon neuronal stimulation, degraded at synapses, reducing RTN4 signaling and allowing AMPA receptor clustering at individual synapses. In Bos taurus (Bovine), this protein is Synaptic plasticity regulator PANTS.